A 547-amino-acid polypeptide reads, in one-letter code: Chaperonin GroEL (547 aa).

Residues 30 to 33 (TLGP), K51, 87 to 91 (DGTTT), G414, 478 to 480 (NAA), and D494 contribute to the ATP site.

The protein belongs to the chaperonin (HSP60) family. As to quaternary structure, forms a cylinder of 14 subunits composed of two heptameric rings stacked back-to-back. Interacts with the co-chaperonin GroES.

Its subcellular location is the cytoplasm. The catalysed reaction is ATP + H2O + a folded polypeptide = ADP + phosphate + an unfolded polypeptide.. Together with its co-chaperonin GroES, plays an essential role in assisting protein folding. The GroEL-GroES system forms a nano-cage that allows encapsulation of the non-native substrate proteins and provides a physical environment optimized to promote and accelerate protein folding. The polypeptide is Chaperonin GroEL (Klebsiella pneumoniae).